A 148-amino-acid polypeptide reads, in one-letter code: Arginine repressor (148 aa).

Belongs to the ArgR family.

The protein localises to the cytoplasm. Its pathway is amino-acid biosynthesis; L-arginine biosynthesis [regulation]. Functionally, regulates arginine biosynthesis genes. This Chlorobium luteolum (strain DSM 273 / BCRC 81028 / 2530) (Pelodictyon luteolum) protein is Arginine repressor.